The chain runs to 354 residues: Deoxyribonuclease-2-beta (354 aa).

The signal sequence occupies residues 1-22 (MTAKPLRTVLSLLFFALSGVLG). N-linked (GlcNAc...) asparagine glycans are attached at residues asparagine 70, asparagine 77, asparagine 95, asparagine 98, asparagine 114, asparagine 129, asparagine 208, asparagine 271, and asparagine 319.

This sequence belongs to the DNase II family. Highly expressed in the eye lens. Detected in liver, but not in the other tissues tested.

It is found in the lysosome. The catalysed reaction is Endonucleolytic cleavage to nucleoside 3'-phosphates and 3'-phosphooligonucleotide end-products.. Functionally, hydrolyzes DNA under acidic conditions. Does not require divalent cations for activity. Participates in the degradation of nuclear DNA during lens cell differentiation. The polypeptide is Deoxyribonuclease-2-beta (Dnase2b) (Mus musculus (Mouse)).